The following is a 213-amino-acid chain: Phosphoribosylformylglycinamidine synthase subunit PurQ (213 aa).

Residues alanine 5–arginine 213 enclose the Glutamine amidotransferase type-1 domain. Cysteine 86 functions as the Nucleophile in the catalytic mechanism. Active-site residues include histidine 186 and glutamate 188.

Part of the FGAM synthase complex composed of 1 PurL, 1 PurQ and 2 PurS subunits.

Its subcellular location is the cytoplasm. It carries out the reaction N(2)-formyl-N(1)-(5-phospho-beta-D-ribosyl)glycinamide + L-glutamine + ATP + H2O = 2-formamido-N(1)-(5-O-phospho-beta-D-ribosyl)acetamidine + L-glutamate + ADP + phosphate + H(+). It catalyses the reaction L-glutamine + H2O = L-glutamate + NH4(+). Its pathway is purine metabolism; IMP biosynthesis via de novo pathway; 5-amino-1-(5-phospho-D-ribosyl)imidazole from N(2)-formyl-N(1)-(5-phospho-D-ribosyl)glycinamide: step 1/2. Part of the phosphoribosylformylglycinamidine synthase complex involved in the purines biosynthetic pathway. Catalyzes the ATP-dependent conversion of formylglycinamide ribonucleotide (FGAR) and glutamine to yield formylglycinamidine ribonucleotide (FGAM) and glutamate. The FGAM synthase complex is composed of three subunits. PurQ produces an ammonia molecule by converting glutamine to glutamate. PurL transfers the ammonia molecule to FGAR to form FGAM in an ATP-dependent manner. PurS interacts with PurQ and PurL and is thought to assist in the transfer of the ammonia molecule from PurQ to PurL. In Thermotoga maritima (strain ATCC 43589 / DSM 3109 / JCM 10099 / NBRC 100826 / MSB8), this protein is Phosphoribosylformylglycinamidine synthase subunit PurQ.